Here is a 262-residue protein sequence, read N- to C-terminus: uncharacterized protein (262 aa).

6 helical membrane-spanning segments follow: residues 7–27 (LAVAISFFVFGASVLYSLAHM), 58–78 (DTLGECLVLVVAVMVSWIVFG), 114–134 (FLAFPMSVLMVALGIITVLGG), 140–160 (GGFQGGALIAAAFILSVIAFG), 179–199 (GALGYLLLGVAGMFIGGYYLF), and 216–236 (IITAGIIPYLNIAVGLKVLAG).

The protein localises to the cell membrane. This is an uncharacterized protein from Methanocaldococcus jannaschii (strain ATCC 43067 / DSM 2661 / JAL-1 / JCM 10045 / NBRC 100440) (Methanococcus jannaschii).